A 165-amino-acid chain; its full sequence is 3-isopropylmalate dehydratase small subunit (165 aa).

Belongs to the LeuD family. LeuD type 2 subfamily. Heterodimer of LeuC and LeuD.

The enzyme catalyses (2R,3S)-3-isopropylmalate = (2S)-2-isopropylmalate. Its pathway is amino-acid biosynthesis; L-leucine biosynthesis; L-leucine from 3-methyl-2-oxobutanoate: step 2/4. In terms of biological role, catalyzes the isomerization between 2-isopropylmalate and 3-isopropylmalate, via the formation of 2-isopropylmaleate. The protein is 3-isopropylmalate dehydratase small subunit of Lachnoclostridium phytofermentans (strain ATCC 700394 / DSM 18823 / ISDg) (Clostridium phytofermentans).